Consider the following 210-residue polypeptide: Outer-membrane lipoprotein LolB (210 aa).

The signal sequence occupies residues 1–18 (MKKLTKLLSLTLLFALAG). Cys19 is lipidated: N-palmitoyl cysteine. A lipid anchor (S-diacylglycerol cysteine) is attached at Cys19.

The protein belongs to the LolB family. Monomer.

The protein localises to the cell outer membrane. Functionally, plays a critical role in the incorporation of lipoproteins in the outer membrane after they are released by the LolA protein. This is Outer-membrane lipoprotein LolB from Glaesserella parasuis serovar 5 (strain SH0165) (Haemophilus parasuis).